Here is a 96-residue protein sequence, read N- to C-terminus: Large ribosomal subunit protein bL27 (96 aa).

Positions 1 to 9 are excised as a propeptide; sequence MLNMNLQLL.

This sequence belongs to the bacterial ribosomal protein bL27 family. Post-translationally, the N-terminus is cleaved by ribosomal processing cysteine protease Prp.

The chain is Large ribosomal subunit protein bL27 from Clostridioides difficile (strain 630) (Peptoclostridium difficile).